We begin with the raw amino-acid sequence, 414 residues long: Multifunctional CCA protein (414 aa).

The ATP site is built by Gly8 and Arg11. CTP-binding residues include Gly8 and Arg11. Asp21 and Asp23 together coordinate Mg(2+). Residues Arg91, Arg137, and Arg140 each contribute to the ATP site. Positions 91, 137, and 140 each coordinate CTP. Positions 228–329 constitute an HD domain; it reads TGIHTLLTLA…LKLLDTIDVW (102 aa).

It belongs to the tRNA nucleotidyltransferase/poly(A) polymerase family. Bacterial CCA-adding enzyme type 1 subfamily. As to quaternary structure, monomer. Can also form homodimers and oligomers. Requires Mg(2+) as cofactor. Ni(2+) serves as cofactor.

The enzyme catalyses a tRNA precursor + 2 CTP + ATP = a tRNA with a 3' CCA end + 3 diphosphate. It carries out the reaction a tRNA with a 3' CCA end + 2 CTP + ATP = a tRNA with a 3' CCACCA end + 3 diphosphate. Its function is as follows. Catalyzes the addition and repair of the essential 3'-terminal CCA sequence in tRNAs without using a nucleic acid template. Adds these three nucleotides in the order of C, C, and A to the tRNA nucleotide-73, using CTP and ATP as substrates and producing inorganic pyrophosphate. tRNA 3'-terminal CCA addition is required both for tRNA processing and repair. Also involved in tRNA surveillance by mediating tandem CCA addition to generate a CCACCA at the 3' terminus of unstable tRNAs. While stable tRNAs receive only 3'-terminal CCA, unstable tRNAs are marked with CCACCA and rapidly degraded. This is Multifunctional CCA protein from Edwardsiella ictaluri (strain 93-146).